Here is an 86-residue protein sequence, read N- to C-terminus: Neurotoxin-like protein NTL2 (86 aa).

A signal peptide spans 1 to 21 (MKTLLLSLVVVTIVCLDLGYT). 4 cysteine pairs are disulfide-bonded: cysteine 24-cysteine 45, cysteine 38-cysteine 63, cysteine 67-cysteine 78, and cysteine 79-cysteine 84.

The protein belongs to the three-finger toxin family. Short-chain subfamily. Orphan group I sub-subfamily. As to expression, expressed by the venom gland.

It localises to the secreted. In Naja atra (Chinese cobra), this protein is Neurotoxin-like protein NTL2.